We begin with the raw amino-acid sequence, 599 residues long: UvrABC system protein C (599 aa).

One can recognise a GIY-YIG domain in the interval E15–V93. The 36-residue stretch at H207–Y242 folds into the UVR domain.

This sequence belongs to the UvrC family. As to quaternary structure, interacts with UvrB in an incision complex.

It is found in the cytoplasm. Functionally, the UvrABC repair system catalyzes the recognition and processing of DNA lesions. UvrC both incises the 5' and 3' sides of the lesion. The N-terminal half is responsible for the 3' incision and the C-terminal half is responsible for the 5' incision. The chain is UvrABC system protein C from Porphyromonas gingivalis (strain ATCC BAA-308 / W83).